The chain runs to 611 residues: MKDMDIKAVFIGDKAENGPVYKMLLNKMVDEHLGWRENYIPSDMPAISEGDKLTPDYLATRDHMIEVLDEVSQRLRAGSIPWHSAGRYWGQMNAETLMPALLAYNYAMLWNPNNVALESSMATSQMEAEVGQDFASLFNMADGWGHIAADGSIANLEGLWYARCIKSIPLAVKEVLPEKVKNMSEWALLNLSVEEILEMTESFTDEEMDEVKAASSRSGKNIQKLGKWLVPQTKHYSWMKALDICGVGLDQMVAIPVQEDYRMDINALEKTIRELADQKIPILGVVAVVGTTEEGQVDSVDKIIQLREKLKDEGIYFYLHVDAAYGGYARSLFLNEAGEFVPYASLAEFFEEHHVFHHYVTIDKEVYEGFRAISEADSVTIDPHKMGYVPYAAGGIVIKHKNMRNIISYFAPYVFEKSVKAPDMLGAYILEGSKAGATAAAVWTAHRVLPLNVTGYGQLIGASIEAAQRFREFLEQLHFTVKGKTIEVYPLNHPDFNMVNWVFKVQDCTDLNAINELNEKMFDRSSYMDGDVYGERFITSHTTFTQEDYGDSPIRFIERMGLSKEEWQKEQQITLLRAAIMTPYLNDDRIFNFYTKEIAKAMEKKLNEIIK.

Pyridoxal 5'-phosphate-binding positions include Gly151–Ser152, Thr292, and Asp382–His384. Lys385 carries the post-translational modification N6-(pyridoxal phosphate)lysine. Tyr413 serves as the catalytic Proton donor. Ser433 provides a ligand contact to pyridoxal 5'-phosphate.

This sequence belongs to the group II decarboxylase family. Tyrosine decarboxylase subfamily. In terms of assembly, homodimer. It depends on pyridoxal 5'-phosphate as a cofactor.

The catalysed reaction is L-tyrosine + H(+) = tyramine + CO2. It carries out the reaction L-dopa + H(+) = dopamine + CO2. The protein operates within amino-acid metabolism. With respect to regulation, levodopa decarboxylation is not inhibited by carbidopa, benserazide, and methyldopa, that are three human L-dopa decarboxylase inhibitors. In terms of biological role, catalyzes the decarboxylation of L-tyrosine to produce tyramine. Plays a role in acid resistance since tyramine production via tyrosine decarboxylation appears to provide a cytosolic pH maintenance mechanism that helps the bacterium cope with acid stress such as that encountered in gastrointestinal tract (GIT) environments. Therefore, may contribute to the colonization of the human GIT by E.faecium. Also involved in drug metabolism, being able to catalyze decarboxylation of levodopa (L-dopa) to dopamine. In gut microbiota this enzyme is in fact exclusively responsible for the decarboxylation of levodopa, and thus reduces in situ levels of levodopa in the treatment of Parkinson's disease. It was shown that abundance of bacterial tyrosine decarboxylase in the proximal small intestine - the primary site of levodopa absorption - contributes to interindividual variation in drug efficacy and can explain the requirement for an increased dosage regimen of levodopa treatment in Parkinson's disease patients. The polypeptide is L-tyrosine decarboxylase (Enterococcus faecium (Streptococcus faecium)).